The chain runs to 1264 residues: uncharacterized protein (1264 aa).

Residues 1–18 (MMRKYLILLILLPALAVG) form the signal peptide. Residues 1215 to 1235 (SYTVLGVVVITILTMSIILCL) form a helical membrane-spanning segment.

Its subcellular location is the host membrane. This is an uncharacterized protein from Ostreid herpesvirus 1 (isolate France) (OsHV-1).